Reading from the N-terminus, the 51-residue chain is uncharacterized protein (51 aa).

Transmembrane regions (helical) follow at residues 6-26 and 28-48; these read LLGV…ICID and SSVF…FVLL.

The protein localises to the host membrane. This is an uncharacterized protein from Enterobacteria phage T4 (Bacteriophage T4).